The primary structure comprises 391 residues: uncharacterized protein (391 aa).

Residues 118–149 are compositionally biased toward low complexity; the sequence is SINSLPPTTTTTTTTTTTTTIPNNNNNITLSP. Disordered regions lie at residues 118–162, 184–258, 272–327, and 337–356; these read SINS…HQHP, QTNV…TPRN, NNNL…NNLN, and LNLN…NNNN. Residues 150-162 show a composition bias toward basic residues; the sequence is QHHHGQQQHHQHP. Positions 186 to 211 are enriched in low complexity; sequence NVNNNNNNNNNNNNNNNSNNNNNNNN. The span at 212-223 shows a compositional bias: polar residues; sequence DFSTPNSFSVPT. Residues 244-256 are compositionally biased toward low complexity; that stretch reads NTPNNSTSNPTTP.

This is an uncharacterized protein from Dictyostelium discoideum (Social amoeba).